The primary structure comprises 368 residues: Cytochrome-c peroxidase IdrP2 (368 aa).

The N-terminal stretch at 1–27 (MKWHRGRLTQTLGAMGLTATLTVAAQA) is a signal peptide. Cytochrome c domains are found at residues 48–158 (AMIE…ALWQ) and 201–346 (KEAQ…LTLS). Residues Cys70, Cys73, His74, Cys216, Cys219, and His220 each contribute to the heme c site.

The iodate reductase (Idr) complex is composed of a molybdopterin-dependent iodate reductase (IdrA and IdrB subunits) and two associated peroxidases (IdrP1 and IdrP2). Requires heme c as cofactor.

The protein localises to the periplasm. It carries out the reaction 2 Fe(II)-[cytochrome c] + H2O2 + 2 H(+) = 2 Fe(III)-[cytochrome c] + 2 H2O. Functionally, involved in iodate respiration. Probably reduces the H(2)O(2) produced by IdrA/IdrB to H(2)O, using a reduced cytochrome c as the electron donor. This Pseudomonas sp. (strain SCT) protein is Cytochrome-c peroxidase IdrP2.